The sequence spans 347 residues: NADH-ubiquinone oxidoreductase chain 2 (347 aa).

11 helical membrane-spanning segments follow: residues 3–23 (PLIF…VMMS), 25–45 (HWLM…PLLM), 59–79 (YFLT…INLL), 96–116 (IIMT…FWVP), 122–144 (ISLS…VLYV), 149–171 (INLD…GGLN), 178–198 (ILAY…VFNP), 202–222 (LLNL…FMVA), 247–267 (IMLS…WMII), 276–296 (ITLA…YMRL), and 326–346 (LPVL…ITLL).

Belongs to the complex I subunit 2 family. As to quaternary structure, core subunit of respiratory chain NADH dehydrogenase (Complex I) which is composed of 45 different subunits. Interacts with TMEM242.

The protein resides in the mitochondrion inner membrane. It catalyses the reaction a ubiquinone + NADH + 5 H(+)(in) = a ubiquinol + NAD(+) + 4 H(+)(out). Functionally, core subunit of the mitochondrial membrane respiratory chain NADH dehydrogenase (Complex I) which catalyzes electron transfer from NADH through the respiratory chain, using ubiquinone as an electron acceptor. Essential for the catalytic activity and assembly of complex I. The sequence is that of NADH-ubiquinone oxidoreductase chain 2 from Saccopteryx bilineata (Greater white-lined bat).